The primary structure comprises 464 residues: Soluble pyridine nucleotide transhydrogenase (464 aa).

35 to 44 is an FAD binding site; sequence DDRRQVGGNC.

This sequence belongs to the class-I pyridine nucleotide-disulfide oxidoreductase family. Requires FAD as cofactor.

It is found in the cytoplasm. The catalysed reaction is NAD(+) + NADPH = NADH + NADP(+). Its function is as follows. Conversion of NADPH, generated by peripheral catabolic pathways, to NADH, which can enter the respiratory chain for energy generation. This Pseudomonas putida (strain GB-1) protein is Soluble pyridine nucleotide transhydrogenase.